We begin with the raw amino-acid sequence, 103 residues long: Potassium voltage-gated channel subfamily E member 3 (103 aa).

N-linked (GlcNAc...) asparagine glycosylation is found at Asn-5, Asn-22, and Asn-41. The interval 32-53 (RPGPGLGPDNQTEERRASLPGR) is disordered. Positions 43-53 (TEERRASLPGR) are enriched in basic and acidic residues. The chain crosses the membrane as a helical span at residues 57-77 (SYMYILFVMFLFAVTVGSLIL). An interaction with KCNQ1 region spans residues 68–79 (FAVTVGSLILGY). The Cytoplasmic segment spans residues 78-103 (GYTRSRKVDKRSDPYHVYIKNRVSMI).

Belongs to the potassium channel KCNE family. In terms of assembly, interacts with KCNB1. Interacts with KCNC2. Associates with KCNC4/Kv3.4. Interacts with KCNQ1; associates with a KCNQ1:KCNE3 stoichiometry of 4:4; produces a current with nearly instantaneous activation with a linear current-voltage relationship and alters membrane raft localization; affects KCNQ1 structure and gating properties. As to expression, expressed in hippocampal neurons (at protein level). Widely expressed with highest levels in kidney and moderate levels in small intestine.

It localises to the cell membrane. The protein localises to the cytoplasm. The protein resides in the perikaryon. Its subcellular location is the cell projection. It is found in the dendrite. It localises to the membrane raft. Its function is as follows. Ancillary protein that functions as a regulatory subunit of the voltage-gated potassium (Kv) channel complex composed of pore-forming and potassium-conducting alpha subunits and of regulatory beta subunits. KCNE3 beta subunit modulates the gating kinetics and enhances stability of the channel complex. Alters the gating of the delayed rectifier Kv channel containing KCNB1 alpha subunit. Associates with KCNC4/Kv3.4 alpha subunit to form the subthreshold Kv channel in skeletal muscle and to establish the resting membrane potential (RMP) in muscle cells. Association with KCNQ1/KCLQT1 alpha subunit may form the intestinal cAMP-stimulated potassium channel involved in chloride secretion that produces a current with nearly instantaneous activation with a linear current-voltage relationship. The polypeptide is Potassium voltage-gated channel subfamily E member 3 (Homo sapiens (Human)).